Consider the following 630-residue polypeptide: Alpha-1,4-glucan:maltose-1-phosphate maltosyltransferase (630 aa).

Arg234, Gln294, and Asp329 together coordinate alpha-maltose 1-phosphate. Residue Asp365 is the Nucleophile of the active site. Position 366 (Asn366) interacts with alpha-maltose 1-phosphate. Catalysis depends on Glu394, which acts as the Proton donor. 504-505 contacts alpha-maltose 1-phosphate; the sequence is KY.

It belongs to the glycosyl hydrolase 13 family. GlgE subfamily. Homodimer.

The catalysed reaction is alpha-maltose 1-phosphate + [(1-&gt;4)-alpha-D-glucosyl](n) = [(1-&gt;4)-alpha-D-glucosyl](n+2) + phosphate. Functionally, maltosyltransferase that uses maltose 1-phosphate (M1P) as the sugar donor to elongate linear or branched alpha-(1-&gt;4)-glucans. Is involved in a branched alpha-glucan biosynthetic pathway from trehalose, together with TreS, Mak and GlgB. This Picrophilus torridus (strain ATCC 700027 / DSM 9790 / JCM 10055 / NBRC 100828 / KAW 2/3) protein is Alpha-1,4-glucan:maltose-1-phosphate maltosyltransferase.